We begin with the raw amino-acid sequence, 948 residues long: Receptor-like protein 45 (948 aa).

Residues 1 to 26 (MSSSKLMDFGLTWIIMMMILLQGCRS) form the signal peptide. At 27–897 (CIESERQGLL…EDDDESGLLD (871 aa)) the chain is on the extracellular side. N-linked (GlcNAc...) asparagine glycans are attached at residues Asn-99 and Asn-113. LRR repeat units lie at residues 106–129 (FEEL…RKGG) and 135–162 (LRNL…AVSL). An LRR 3; degenerate repeat occupies 163-183 (KTLILHDNLFKGGFPVQELIN). Residue Asn-183 is glycosylated (N-linked (GlcNAc...) asparagine). LRR repeat units follow at residues 184 to 208 (LTSL…ELTN), 210 to 233 (RNLR…GICR), 234 to 257 (LEQL…CFSR), 258 to 284 (FSKL…DFKS), 286 to 306 (EYLS…LITE), 307 to 332 (LTEL…VSGG), 334 to 357 (QSQL…LWYQ), 358 to 381 (QELR…LLEN), 382 to 404 (NTEL…PRTM), 405 to 429 (RRLQ…GLIL), 430 to 453 (ASLR…MARM), 454 to 477 (ENIE…LFTG), 479 to 502 (YSLS…SSDE), 503 to 526 (TSLI…LLNL), 527 to 549 (RMLS…WLGN), 550 to 573 (FFLE…LFNI), 575 to 595 (YLWL…LRSS), 596 to 618 (SDYG…DTLW), 619 to 640 (YGLR…LFRS), 642 to 665 (PSIS…LCGL), 666 to 689 (SNVR…VTNL), 758 to 782 (LNQM…LGDL), 783 to 805 (KRVR…SFSN), 807 to 831 (RSIE…TLLQ), and 833 to 855 (LVVF…QFNT). The N-linked (GlcNAc...) asparagine glycan is linked to Asn-328. N-linked (GlcNAc...) asparagine glycans are attached at residues Asn-381 and Asn-392. 2 N-linked (GlcNAc...) asparagine glycosylation sites follow: Asn-436 and Asn-465. A glycan (N-linked (GlcNAc...) asparagine) is linked at Asn-608. 3 N-linked (GlcNAc...) asparagine glycosylation sites follow: Asn-653, Asn-679, and Asn-688. Residue Asn-789 is glycosylated (N-linked (GlcNAc...) asparagine). 2 N-linked (GlcNAc...) asparagine glycosylation sites follow: Asn-837 and Asn-842. Residues 898–918 (IVVLWWSLGTTYVTVMMGFLV) form a helical membrane-spanning segment. Over 919 to 948 (FLCFDSPWRRAWFCLVDTFIDRVKDVLGVI) the chain is Cytoplasmic.

Belongs to the RLP family.

Its subcellular location is the cell membrane. The protein is Receptor-like protein 45 of Arabidopsis thaliana (Mouse-ear cress).